A 311-amino-acid chain; its full sequence is Aspartate carbamoyltransferase catalytic subunit (311 aa).

Arginine 58 and threonine 59 together coordinate carbamoyl phosphate. Lysine 86 contacts L-aspartate. Arginine 108, histidine 136, and glutamine 139 together coordinate carbamoyl phosphate. Residues arginine 169 and arginine 223 each coordinate L-aspartate. Carbamoyl phosphate contacts are provided by glycine 264 and proline 265.

Belongs to the aspartate/ornithine carbamoyltransferase superfamily. ATCase family. Heterododecamer (2C3:3R2) of six catalytic PyrB chains organized as two trimers (C3), and six regulatory PyrI chains organized as three dimers (R2).

It carries out the reaction carbamoyl phosphate + L-aspartate = N-carbamoyl-L-aspartate + phosphate + H(+). It participates in pyrimidine metabolism; UMP biosynthesis via de novo pathway; (S)-dihydroorotate from bicarbonate: step 2/3. Functionally, catalyzes the condensation of carbamoyl phosphate and aspartate to form carbamoyl aspartate and inorganic phosphate, the committed step in the de novo pyrimidine nucleotide biosynthesis pathway. The chain is Aspartate carbamoyltransferase catalytic subunit from Ruegeria pomeroyi (strain ATCC 700808 / DSM 15171 / DSS-3) (Silicibacter pomeroyi).